The primary structure comprises 469 residues: Aspartyl/glutamyl-tRNA(Asn/Gln) amidotransferase subunit B (469 aa).

It belongs to the GatB/GatE family. GatB subfamily. In terms of assembly, heterotrimer of A, B and C subunits.

The catalysed reaction is L-glutamyl-tRNA(Gln) + L-glutamine + ATP + H2O = L-glutaminyl-tRNA(Gln) + L-glutamate + ADP + phosphate + H(+). It carries out the reaction L-aspartyl-tRNA(Asn) + L-glutamine + ATP + H2O = L-asparaginyl-tRNA(Asn) + L-glutamate + ADP + phosphate + 2 H(+). Allows the formation of correctly charged Asn-tRNA(Asn) or Gln-tRNA(Gln) through the transamidation of misacylated Asp-tRNA(Asn) or Glu-tRNA(Gln) in organisms which lack either or both of asparaginyl-tRNA or glutaminyl-tRNA synthetases. The reaction takes place in the presence of glutamine and ATP through an activated phospho-Asp-tRNA(Asn) or phospho-Glu-tRNA(Gln). The chain is Aspartyl/glutamyl-tRNA(Asn/Gln) amidotransferase subunit B from Methanococcus maripaludis (strain DSM 14266 / JCM 13030 / NBRC 101832 / S2 / LL).